Reading from the N-terminus, the 120-residue chain is NAD(P)H-quinone oxidoreductase subunit 3, chloroplastic (120 aa).

3 consecutive transmembrane segments (helical) span residues 9–29 (IFWAFLIISSAIPVLAFLISG), 64–84 (MFALVFVVFDVETVFLYPWAM), and 88–108 (VLGVSAFIEVFIFVLILILGL).

It belongs to the complex I subunit 3 family. As to quaternary structure, NDH is composed of at least 16 different subunits, 5 of which are encoded in the nucleus.

The protein resides in the plastid. The protein localises to the chloroplast thylakoid membrane. It catalyses the reaction a plastoquinone + NADH + (n+1) H(+)(in) = a plastoquinol + NAD(+) + n H(+)(out). It carries out the reaction a plastoquinone + NADPH + (n+1) H(+)(in) = a plastoquinol + NADP(+) + n H(+)(out). NDH shuttles electrons from NAD(P)H:plastoquinone, via FMN and iron-sulfur (Fe-S) centers, to quinones in the photosynthetic chain and possibly in a chloroplast respiratory chain. The immediate electron acceptor for the enzyme in this species is believed to be plastoquinone. Couples the redox reaction to proton translocation, and thus conserves the redox energy in a proton gradient. The chain is NAD(P)H-quinone oxidoreductase subunit 3, chloroplastic from Arabis hirsuta (Hairy rock-cress).